The following is a 384-amino-acid chain: 23S rRNA (uracil(747)-C(5))-methyltransferase RlmC (384 aa).

4 residues coordinate [4Fe-4S] cluster: C3, C11, C14, and C87. S-adenosyl-L-methionine-binding residues include Q212, F241, E262, and N309. The active-site Nucleophile is C336.

This sequence belongs to the class I-like SAM-binding methyltransferase superfamily. RNA M5U methyltransferase family. RlmC subfamily.

It catalyses the reaction uridine(747) in 23S rRNA + S-adenosyl-L-methionine = 5-methyluridine(747) in 23S rRNA + S-adenosyl-L-homocysteine + H(+). In terms of biological role, catalyzes the formation of 5-methyl-uridine at position 747 (m5U747) in 23S rRNA. The polypeptide is 23S rRNA (uracil(747)-C(5))-methyltransferase RlmC (Shewanella amazonensis (strain ATCC BAA-1098 / SB2B)).